The chain runs to 340 residues: Geranylgeranyl pyrophosphate synthase atmG (340 aa).

The segment covering N19–T48 has biased composition (polar residues). Residues N19–D51 are disordered. Residues K69, R72, and H101 each coordinate isopentenyl diphosphate. D108 and D112 together coordinate Mg(2+). R117 provides a ligand contact to dimethylallyl diphosphate. Residue R118 participates in isopentenyl diphosphate binding. The dimethylallyl diphosphate site is built by K195, T196, and Q229. D232 lines the Mg(2+) pocket. Residues N236, K246, and K256 each contribute to the dimethylallyl diphosphate site.

The protein belongs to the FPP/GGPP synthase family. It depends on Mg(2+) as a cofactor.

The enzyme catalyses isopentenyl diphosphate + dimethylallyl diphosphate = (2E)-geranyl diphosphate + diphosphate. The catalysed reaction is isopentenyl diphosphate + (2E)-geranyl diphosphate = (2E,6E)-farnesyl diphosphate + diphosphate. It catalyses the reaction isopentenyl diphosphate + (2E,6E)-farnesyl diphosphate = (2E,6E,10E)-geranylgeranyl diphosphate + diphosphate. Its function is as follows. Geranylgeranyl pyrophosphate synthase; part of the ATM1 gene cluster that mediates the biosynthesis of aflatrem, a tremorgenic mycotoxin with acute neurotoxic effects. Synthesis of geranylgeranyl diphosphate (GGPP) by AtmG (a GGPP synthase) precedes condensation of GGPP with indole 3-glycerol phosphate, followed by epoxidation and cyclization by AtmM (a FAD-dependent monooxygenase) and AtmC (a prenyltransferase) to produce paspaline. AtmB is also essential for paspaline production, but its exact role has not been identified yet. AtmP, a cytochrome P450 monooxygenase, subsequently converts paspaline to 13-desoxypaxilline via PC-M6 by removal of the C-30 methyl group and oxidation at C-10. AtmQ, a cytochrome P450 monooxygenase, then catalyzes the oxidation of 13-desoxypaxilline, first at C-7 to produce paspalicine and then at C-13 to form paspalinine. Finally, AtmD prenylates paspalinine to form aflatrem. The chain is Geranylgeranyl pyrophosphate synthase atmG from Aspergillus flavus.